The following is an 808-amino-acid chain: MAEEVGETRGGEGKEKTETMAVENKLKERKISWAKLRRVDSLNLEAGRVSKTQHNNQVNWKKTLSLTFQSIGVVYGDIGTSPLYVYESTFPDKIGSKEDILGVLSLIIYTLVLLPMLKYVFIVLRANDNGDGGTFALYSLLSRYVKVSLIPNDQPEDTQLSNYKLEIPSNQLKRSEKIKEKMENSKNIKILLFLVTILGTSMVIGDGVLTPCISVLSAVSGIGSLGQDAVVGISIAILIVLFCAQRLGTDKVGFSFAPIILLWFSFIGGIGLYNLFKYDVSVLRAFNPKYMFDYFKRNGKQGWISLGGVVLAVTGTEAMFADLGHFNVQAIQISFSGIVFPALLCAYAGQAAYLTKFPDDVSKTFYKSIPDPLYWPTFVVAVAAAIIASQAMISGAFAIISQSLSLGCFPRVKVIHTSAKYEGQVYIPEVNYILMIACIMVCLGFKTTEKIGNAYGIAVVAVMVITTCMVTIIMLVVWRTKMIWIAFFFFGFICIEAVYLSSVLYKFKDGGFLPLAFSFFLMIIMGIWHYIHKERYMYELKNKVSREFIRELAANPNINRVPGIGLLYSELVQGVPPIFPHFIANIPSIHSVLVFVSIKSLPMSKVALEERFLFRQVEPREYRMFRCVVRYGYNDAVEEPQEFERQLVEGLKEFIRHEHFISEGGDAETVGEPENPQSSTLLAKDGKARASAVYIEESLQQPNPSRVSSGSIHSNSGIKSTKSSNGIISAPLQGSAAEEMQIVQNAMEKGVVYLLGEAEVVAEPKSSLFKKFVVNHAYNFLRRNSREGGKVLAIPRARLLRVGMTYEI.

Over methionine 1 to serine 65 the chain is Cytoplasmic. A helical transmembrane segment spans residues leucine 66–tyrosine 86. Topologically, residues glutamate 87–glycine 102 are extracellular. A helical transmembrane segment spans residues valine 103–valine 123. Residues leucine 124 to lysine 189 are Cytoplasmic-facing. The chain crosses the membrane as a helical span at residues isoleucine 190–threonine 210. The Extracellular portion of the chain corresponds to proline 211–glycine 221. The helical transmembrane segment at isoleucine 222–phenylalanine 242 threads the bilayer. The Cytoplasmic portion of the chain corresponds to cysteine 243–lysine 251. The chain crosses the membrane as a helical span at residues valine 252 to leucine 272. The Extracellular segment spans residues tyrosine 273–glycine 302. The chain crosses the membrane as a helical span at residues tryptophan 303–leucine 323. Topologically, residues glycine 324 to asparagine 327 are cytoplasmic. The helical transmembrane segment at valine 328–alanine 348 threads the bilayer. Residues glycine 349–valine 379 lie on the Extracellular side of the membrane. The helical transmembrane segment at valine 380–isoleucine 400 threads the bilayer. The Cytoplasmic portion of the chain corresponds to serine 401–glutamine 424. A helical transmembrane segment spans residues valine 425 to phenylalanine 445. At lysine 446–glycine 456 the chain is on the extracellular side. The chain crosses the membrane as a helical span at residues isoleucine 457 to valine 477. At tryptophan 478–methionine 482 the chain is on the cytoplasmic side. A helical transmembrane segment spans residues isoleucine 483–valine 503. The Extracellular portion of the chain corresponds to leucine 504–glycine 510. The chain crosses the membrane as a helical span at residues glycine 511–isoleucine 531. Residues histidine 532–isoleucine 808 are Cytoplasmic-facing. Positions leucine 699–lysine 722 are disordered.

This sequence belongs to the HAK/KUP transporter (TC 2.A.72.3) family. As to expression, expressed in the roots.

It localises to the cell membrane. It catalyses the reaction K(+)(in) = K(+)(out). Functionally, high-affinity potassium transporter that functions under low potassium conditions. Involved in the positive regulation of salt tolerance under salt stress. The polypeptide is Potassium transporter 5 (Manihot esculenta (Cassava)).